Here is a 23-residue protein sequence, read N- to C-terminus: Mu-conotoxin-like SxIIIB (23 aa).

Pyrrolidone carboxylic acid is present on Q1. Cystine bridges form between C3–C16, C4–C21, and C11–C22. An Alanine amide modification is found at A23.

Belongs to the conotoxin M superfamily. In terms of tissue distribution, expressed by the venom duct.

The protein localises to the secreted. Its function is as follows. Mu-conotoxins block voltage-gated sodium channels (Nav). The protein is Mu-conotoxin-like SxIIIB of Conus striolatus (Cone snail).